A 360-amino-acid chain; its full sequence is F-box protein SKP2A (360 aa).

Residues 25 to 71 (IKEWKDIPVELLMRILSLVDDRNVIVASGVCTGWRDAISFGLTRLRL) enclose the F-box domain. Residues 127 to 128 (SL), 149 to 152 (NLSG), 175 to 178 (NLCG), and asparagine 202 each bind (indol-3-yl)acetate.

As to quaternary structure, part of a SCF (ASK-cullin-F-box) protein ligase complex. Interacts with CUL1 (RUB1-modified and non-modified isoforms), SKP1A, SKP1B and ASK18. Recruit DPB and phosphorylated E2FC. Interacts with auxin. Auxin controls the interaction with DPB. In terms of processing, polyubiquitinated and subsequently targeted to proteasome. Auxin promotes this ubiquitination-mediated degradation. As to expression, expressed in embryo, seedlings, hypocotyl, roots, leaves and flowers.

It localises to the nucleus. It functions in the pathway protein modification; protein ubiquitination. Functionally, component of SCF(SKP2A) E3 ubiquitin ligase complexes, which mediate the ubiquitination and subsequent proteasomal degradation of target proteins (including cell cycle repressors). Acts as an auxin receptor; one active auxin is indole-3-acetate. Regulates the stability of the transcription factors E2FC and DPB, repressors of cell proliferation. Confers increase tolerance to osmotic stress by promoting cell division, especially in meristems. Promotes the formation of lateral root primordia. This is F-box protein SKP2A (SKP2A) from Arabidopsis thaliana (Mouse-ear cress).